The following is a 149-amino-acid chain: Large ribosomal subunit protein bL9 (149 aa).

Belongs to the bacterial ribosomal protein bL9 family.

Functionally, binds to the 23S rRNA. In Magnetococcus marinus (strain ATCC BAA-1437 / JCM 17883 / MC-1), this protein is Large ribosomal subunit protein bL9.